We begin with the raw amino-acid sequence, 200 residues long: Integrin beta-1-binding protein 1 (200 aa).

The segment covering 1–10 has biased composition (basic residues); sequence MFRKGKKRHS. The interval 1-55 is disordered; sequence MFRKGKKRHSSSSSQSSEISTKSKSVDSSLGGLSRSSTVASLDTDSTKSSGQSNS. Positions 6 to 7 match the Nuclear localization signal motif; the sequence is KK. Positions 11 to 29 are enriched in low complexity; that stretch reads SSSSQSSEISTKSKSVDSS. Positions 34–55 are enriched in polar residues; it reads SRSSTVASLDTDSTKSSGQSNS. At Thr-38 the chain carries Phosphothreonine; by CaMK2. Phosphoserine is present on Ser-41. The PID domain maps to 58–200; sequence DTCAEFRIKY…FDSVLTSDKS (143 aa). Positions 136–139 are interaction with KRIT1; that stretch reads YLII. The tract at residues 139–141 is interaction with ITGB1; it reads IRM.

Found in a complex, at least composed of ITGB1BP1, KRIT1 and RAP1A. Interacts (via C-terminal region) with ITGB1 (via C-terminal cytoplasmic tail); the interaction prevents talin TLN1 binding to ITGB1 and KRIT1 and ITGB1 compete for the same binding site. Interacts with KRIT1 (via N-terminal NPXY motif); the interaction induces the opening conformation of KRIT1 and KRIT1 and ITGB1 compete for the same binding site. Isoform 2 does not interact with ITGB1. Interacts with CDC42 (GTP- or GDP-bound form); the interaction is increased with the CDC42-membrane bound forms and prevents both CDC42 activation and cell spreading. Interacts (via C-terminal domain region) with NME2. Interacts with FERMT2 and RAC1. Interacts (via N-terminus and PTB domain) with ROCK1. Post-translationally, phosphorylation at Thr-38 seems to enhance integrin alpha5beta1-mediated cell adhesion. The degree of phosphorylation is regulated by integrin-dependent cell-matrix interaction. In terms of tissue distribution, expressed in the brain.

The protein resides in the nucleus. The protein localises to the cytoplasm. It is found in the cytoskeleton. Its subcellular location is the cell membrane. It localises to the cell projection. The protein resides in the lamellipodium. The protein localises to the ruffle. Key regulator of the integrin-mediated cell-matrix interaction signaling by binding to the ITGB1 cytoplasmic tail and preventing the activation of integrin alpha-5/beta-1 (heterodimer of ITGA5 and ITGB1) by talin or FERMT1. Plays a role in cell proliferation, differentiation, spreading, adhesion and migration in the context of mineralization and bone development and angiogenesis. Stimulates cellular proliferation in a fibronectin-dependent manner. Involved in the regulation of beta-1 integrin-containing focal adhesion (FA) site dynamics by controlling its assembly rate during cell adhesion; inhibits beta-1 integrin clustering within FA by directly competing with talin TLN1, and hence stimulates osteoblast spreading and migration in a fibronectin- and/or collagen-dependent manner. Acts as a guanine nucleotide dissociation inhibitor (GDI) by regulating Rho family GTPases during integrin-mediated cell matrix adhesion; reduces the level of active GTP-bound form of both CDC42 and RAC1 GTPases upon cell adhesion to fibronectin. Stimulates the release of active CDC42 from the membranes to maintain it in an inactive cytoplasmic pool. Participates in the translocation of the Rho-associated protein kinase ROCK1 to membrane ruffles at cell leading edges of the cell membrane, leading to an increase of myoblast cell migration on laminin. Plays a role in bone mineralization at a late stage of osteoblast differentiation; modulates the dynamic formation of focal adhesions into fibrillar adhesions, which are adhesive structures responsible for fibronectin deposition and fibrillogenesis. Plays a role in blood vessel development; acts as a negative regulator of angiogenesis by attenuating endothelial cell proliferation and migration, lumen formation and sprouting angiogenesis by promoting AKT phosphorylation and inhibiting ERK1/2 phosphorylation through activation of the Notch signaling pathway. Promotes transcriptional activity of the MYC promoter. This Mus musculus (Mouse) protein is Integrin beta-1-binding protein 1 (Itgb1bp1).